The sequence spans 248 residues: MLLGIITLFPDMFNAITRYGVVGRSVRKGGLVIKIWNPRDFTYDQYHKVDDRPYGGGVGMIMMIQPLKRAINQAKNDLGCDAKVIYLSPQGKRLCQKYVYDLAYNNQALILVCGRYQGIDERLIKMEIDEEWSIGDYVLSGGELASMVLIDAMARVLPGTLKNRNSQKSDSFFENKLDCPYYTRPKIYEGMQVPSVLLSGNHRDINKWRLKYALGNTWIKRPDLLKKIQLTQEEQLLLTEFKNEYLSG.

Residues glycine 114 and 134-139 (IGDYVL) each bind S-adenosyl-L-methionine.

It belongs to the RNA methyltransferase TrmD family. Homodimer.

It localises to the cytoplasm. The catalysed reaction is guanosine(37) in tRNA + S-adenosyl-L-methionine = N(1)-methylguanosine(37) in tRNA + S-adenosyl-L-homocysteine + H(+). Specifically methylates guanosine-37 in various tRNAs. The polypeptide is tRNA (guanine-N(1)-)-methyltransferase (Blochmanniella floridana).